A 569-amino-acid polypeptide reads, in one-letter code: Sulfite reductase [NADPH] hemoprotein beta-component (569 aa).

Residues cysteine 433, cysteine 439, cysteine 478, and cysteine 482 each coordinate [4Fe-4S] cluster. Residue cysteine 482 participates in siroheme binding.

It belongs to the nitrite and sulfite reductase 4Fe-4S domain family. Alpha(8)-beta(8). The alpha component is a flavoprotein, the beta component is a hemoprotein. Requires siroheme as cofactor. [4Fe-4S] cluster is required as a cofactor.

The enzyme catalyses hydrogen sulfide + 3 NADP(+) + 3 H2O = sulfite + 3 NADPH + 4 H(+). Its pathway is sulfur metabolism; hydrogen sulfide biosynthesis; hydrogen sulfide from sulfite (NADPH route): step 1/1. Its function is as follows. Component of the sulfite reductase complex that catalyzes the 6-electron reduction of sulfite to sulfide. This is one of several activities required for the biosynthesis of L-cysteine from sulfate. The sequence is that of Sulfite reductase [NADPH] hemoprotein beta-component from Blochmanniella floridana.